We begin with the raw amino-acid sequence, 358 residues long: Membrane-bound lytic murein transglycosylase C (358 aa).

Residues 1–19 form the signal peptide; it reads MKITLKKLLILAIVPFLYA. Cys-20 carries the N-palmitoyl cysteine lipid modification. The S-diacylglycerol cysteine moiety is linked to residue Cys-20.

Belongs to the transglycosylase Slt family.

Its subcellular location is the cell outer membrane. It carries out the reaction Exolytic cleavage of the (1-&gt;4)-beta-glycosidic linkage between N-acetylmuramic acid (MurNAc) and N-acetylglucosamine (GlcNAc) residues in peptidoglycan, from either the reducing or the non-reducing ends of the peptidoglycan chains, with concomitant formation of a 1,6-anhydrobond in the MurNAc residue.. Functionally, murein-degrading enzyme. May play a role in recycling of muropeptides during cell elongation and/or cell division. This is Membrane-bound lytic murein transglycosylase C from Actinobacillus succinogenes (strain ATCC 55618 / DSM 22257 / CCUG 43843 / 130Z).